The primary structure comprises 478 residues: Chromosomal replication initiator protein DnaA (478 aa).

Residues 1–71 are domain I, interacts with DnaA modulators; the sequence is MKEFWQTCVS…EALAAEWFQR (71 aa). Residues 71–140 form a domain II region; it reads RPVQVAFELP…DAAGVVYERS (70 aa). The tract at residues 141–357 is domain III, AAA+ region; sequence RLNTDLTFDN…GALRKVLAYA (217 aa). The ATP site is built by Gly-185, Gly-187, Lys-188, and Thr-189. The domain IV, binds dsDNA stretch occupies residues 358 to 478; the sequence is RFHGRDVLSV…LHVLEQTLKG (121 aa).

It belongs to the DnaA family. In terms of assembly, oligomerizes as a right-handed, spiral filament on DNA at oriC.

It is found in the cytoplasm. Plays an essential role in the initiation and regulation of chromosomal replication. ATP-DnaA binds to the origin of replication (oriC) to initiate formation of the DNA replication initiation complex once per cell cycle. Binds the DnaA box (a 9 base pair repeat at the origin) and separates the double-stranded (ds)DNA. Forms a right-handed helical filament on oriC DNA; dsDNA binds to the exterior of the filament while single-stranded (ss)DNA is stabiized in the filament's interior. The ATP-DnaA-oriC complex binds and stabilizes one strand of the AT-rich DNA unwinding element (DUE), permitting loading of DNA polymerase. After initiation quickly degrades to an ADP-DnaA complex that is not apt for DNA replication. Binds acidic phospholipids. This Bordetella petrii (strain ATCC BAA-461 / DSM 12804 / CCUG 43448) protein is Chromosomal replication initiator protein DnaA.